Reading from the N-terminus, the 61-residue chain is MSNSSNSTSLSNFSGIGVGVILTLVILFILILALLCLRVAACCTHVCTYCQLFKRWGQHPR.

Residues 1 to 14 are Lumenal-facing; it reads MSNSSNSTSLSNFS. N-linked (GlcNAc...) asparagine; by host glycosylation is found at Asn-3, Asn-6, and Asn-12. The chain crosses the membrane as a helical span at residues 15–35; sequence GIGVGVILTLVILFILILALL. Over 36 to 61 the chain is Cytoplasmic; that stretch reads CLRVAACCTHVCTYCQLFKRWGQHPR.

It belongs to the adenoviridae E3-CR1 family. Interacts with E3 RID alpha and E3 RID beta. In terms of processing, only 1 of 3 three potential glycosylation sites is glycosylated. Oligosaccharides are not processed from high mannose to the complex type because the protein is retained in the endoplasmic reticulum.

The protein resides in the host endoplasmic reticulum membrane. It is found in the host cell membrane. In terms of biological role, prevents infected cell apoptosis induced by the host immune system. May act by down-regulating host TRAIL receptors. May act in complex with E3 RID alpha and beta. May play a role on cellular apoptosis regulation in the ER. The polypeptide is Early 3 Conserved Region 1-alpha protein (Human adenovirus C serotype 2 (HAdV-2)).